A 354-amino-acid polypeptide reads, in one-letter code: Protein-arginine kinase (354 aa).

Positions 24–254 (IVLSSRIRLA…QQIIQQEKMA (231 aa)) constitute a Phosphagen kinase C-terminal domain. ATP contacts are provided by residues 27 to 31 (SSRIR), His92, Arg125, 176 to 180 (RASVM), and 207 to 212 (RGIYGE). Positions 337–342 (RDYRRA) match the RDXXRA motif of the pArg binding pocket involved in allosteric regulation motif.

This sequence belongs to the ATP:guanido phosphotransferase family.

It carries out the reaction L-arginyl-[protein] + ATP = N(omega)-phospho-L-arginyl-[protein] + ADP + H(+). Appears to be allosterically activated by the binding of pArg-containing polypeptides to the pArg-binding pocket localized in the C-terminal domain of McsB. Functionally, catalyzes the specific phosphorylation of arginine residues in a large number of proteins. Is part of the bacterial stress response system. Protein arginine phosphorylation has a physiologically important role and is involved in the regulation of many critical cellular processes, such as protein homeostasis, motility, competence, and stringent and stress responses, by regulating gene expression and protein activity. The sequence is that of Protein-arginine kinase from Bacillus cereus (strain ATCC 10987 / NRS 248).